A 631-amino-acid polypeptide reads, in one-letter code: Altered inheritance of mitochondria protein 9, mitochondrial (631 aa).

The transit peptide at 1-41 (MLSRVVRQRSRSAISSFKLRAHAAFAETRIGVGISVQATRL) directs the protein to the mitochondrion.

The protein belongs to the AIM9 family.

Its subcellular location is the mitochondrion. This chain is Altered inheritance of mitochondria protein 9, mitochondrial (AIM9), found in Scheffersomyces stipitis (strain ATCC 58785 / CBS 6054 / NBRC 10063 / NRRL Y-11545) (Yeast).